The primary structure comprises 321 residues: Hydrolase 3 (321 aa).

The Involved in the stabilization of the negatively charged intermediate by the formation of the oxyanion hole signature appears at 80–82; it reads HGA. Residues S172 and D267 contribute to the active site.

The protein belongs to the 'GDXG' lipolytic enzyme family.

It catalyses the reaction dihydroprecondylocarpine acetate + NADPH = (+)-vincadifformine + acetate + NADP(+). It participates in alkaloid biosynthesis. In terms of biological role, component of the seco-iridoid and derivatives monoterpenoid indole alkaloids (MIAs, e.g. vincadifformine) biosynthesis pathway. Catalyzes the conversion of O-acetylstemmadenine (OAS) to vincadifformine. May also trigger the formation of additional unknown MIAs. The polypeptide is Hydrolase 3 (Catharanthus roseus (Madagascar periwinkle)).